The following is an 84-amino-acid chain: UPF0153 protein YeiW (84 aa).

Belongs to the UPF0153 family.

The polypeptide is UPF0153 protein YeiW (yeiW) (Escherichia coli (strain K12)).